A 408-amino-acid chain; its full sequence is Probable pectate lyase 5 (408 aa).

The first 27 residues, M1–S27, serve as a signal peptide directing secretion. N-linked (GlcNAc...) asparagine glycosylation occurs at N45. Ca(2+) is bound by residues D206, D230, and D234. Residue R286 is part of the active site.

It belongs to the polysaccharide lyase 1 family. Ca(2+) serves as cofactor.

It carries out the reaction Eliminative cleavage of (1-&gt;4)-alpha-D-galacturonan to give oligosaccharides with 4-deoxy-alpha-D-galact-4-enuronosyl groups at their non-reducing ends.. It participates in glycan metabolism; pectin degradation; 2-dehydro-3-deoxy-D-gluconate from pectin: step 2/5. The polypeptide is Probable pectate lyase 5 (Arabidopsis thaliana (Mouse-ear cress)).